Reading from the N-terminus, the 234-residue chain is Thiamine import ATP-binding protein ThiQ (234 aa).

The ABC transporter domain occupies 2-230 (LVLDDVQYTY…HPSKTLQAFV (229 aa)). 32-39 (GPSGAGKS) is an ATP binding site.

Belongs to the ABC transporter superfamily. Thiamine importer (TC 3.A.1.19.1) family. As to quaternary structure, the complex is composed of two ATP-binding proteins (ThiQ), two transmembrane proteins (ThiP) and a solute-binding protein (ThiB).

It is found in the cell inner membrane. It catalyses the reaction thiamine(out) + ATP + H2O = thiamine(in) + ADP + phosphate + H(+). Its function is as follows. Part of the ABC transporter complex ThiBPQ involved in thiamine import. Responsible for energy coupling to the transport system. The chain is Thiamine import ATP-binding protein ThiQ from Vibrio parahaemolyticus serotype O3:K6 (strain RIMD 2210633).